Reading from the N-terminus, the 395-residue chain is Leukosialin (395 aa).

Positions 1 to 19 (MALHLLLLFGACWVQVASP) are cleaved as a signal peptide. Over 20–248 (DSLQRTTMLP…TRSPSQESSG (229 aa)) the chain is Extracellular. Positions 27–56 (MLPSTPHITAPSTSEAQNASPSVSVGSGTV) are enriched in polar residues. A disordered region spans residues 27 to 245 (MLPSTPHITA…PITTRSPSQE (219 aa)). Over residues 73–88 (SLTPLETTELSSLETS) the composition is skewed to low complexity. Polar residues-rich tracts occupy residues 89–111 (AGAS…SKTS) and 145–154 (TAASTSISKG). Low complexity predominate over residues 155 to 166 (TSAPPTTVTTSS). N-linked (GlcNAc...) asparagine glycosylation occurs at asparagine 167. The segment covering 167 to 196 (NETSGPSVATTVSSKTSGPPVTTATGSLGP) has biased composition (polar residues). Positions 205-241 (ATTATSSVESSSVARGTSVSSRKTSTTSTQDPITTRS) are enriched in low complexity. Residues 249-271 (MLLVPMLIALVVVLALVALLLLW) form a helical membrane-spanning segment. The tract at residues 272–302 (RQRQKRRTGALTLSGGGKRNGVVDAWAGPAR) is required for interaction with EZR, MSN and RDX and for co-localization to microvilli. Topologically, residues 272–395 (RQRQKRRTGA…AKDEAAPQSL (124 aa)) are cytoplasmic. The short motif at 276 to 290 (KRRTGALTLSGGGKR) is the Nuclear localization signal element. Phosphoserine is present on residues serine 285 and serine 328. The segment at 303–395 (VPDEEATTTS…AKDEAAPQSL (93 aa)) is disordered. A compositionally biased stretch (polar residues) spans 327–338 (GSGQRPTLTTFF). Threonine 333 carries the phosphothreonine modification. 2 positions are modified to phosphoserine: serine 339 and serine 343. A Phosphoserine; by PKC/PRKCQ modification is found at serine 347. Serine 371 bears the Phosphoserine mark. Threonine 378 bears the Phosphothreonine mark. Residues 385 to 395 (QAKDEAAPQSL) are compositionally biased toward basic and acidic residues.

As to quaternary structure, interacts with SIGLEC1. Interacts with isoform 2 of HIPK2. Interacts with CTNNB1. Interacts with RDX (via FERM domain). Interacts with EZR. Interacts with MSN. Phosphorylation at Ser-347 is regulated by chemokines, requires its association with ERM proteins (EZR, RDX and MSN) and is essential for its function in the regulation of T-cell trafficking to lymph nodes. Post-translationally, has a high content of sialic acid and O-linked carbohydrate structures. In terms of processing, cleavage by CTSG releases its extracellular domain and triggers its intramembrane proteolysis by gamma-secretase releasing the CD43 cytoplasmic tail chain (CD43-ct) which translocates to the nucleus. Sumoylated. As to expression, cell surface of thymocytes, T-lymphocytes, neutrophils, plasma cells and myelomas.

Its subcellular location is the membrane. The protein localises to the cell projection. It localises to the microvillus. It is found in the uropodium. The protein resides in the nucleus. Its subcellular location is the PML body. Predominant cell surface sialoprotein of leukocytes which regulates multiple T-cell functions, including T-cell activation, proliferation, differentiation, trafficking and migration. Positively regulates T-cell trafficking to lymph-nodes via its association with ERM proteins (EZR, RDX and MSN). Negatively regulates Th2 cell differentiation and predisposes the differentiation of T-cells towards a Th1 lineage commitment. Promotes the expression of IFN-gamma by T-cells during T-cell receptor (TCR) activation of naive cells and induces the expression of IFN-gamma by CD4(+) T-cells and to a lesser extent by CD8(+) T-cells. Plays a role in preparing T-cells for cytokine sensing and differentiation into effector cells by inducing the expression of cytokine receptors IFNGR and IL4R, promoting IFNGR and IL4R signaling and by mediating the clustering of IFNGR with TCR. Acts as a major E-selectin ligand responsible for Th17 cell rolling on activated vasculature and recruitment during inflammation. Mediates Th17 cells, but not Th1 cells, adhesion to E-selectin. Acts as a T-cell counter-receptor for SIGLEC1. Functionally, protects cells from apoptotic signals, promoting cell survival. This Mus musculus (Mouse) protein is Leukosialin (Spn).